Consider the following 381-residue polypeptide: Galactose-1-phosphate uridylyltransferase (381 aa).

Zn(2+)-binding residues include C65 and C68. 90–91 (ND) is a UDP-alpha-D-glucose binding site. Residue H131 participates in Zn(2+) binding. N175 serves as a coordination point for UDP-alpha-D-glucose. H186 provides a ligand contact to Zn(2+). The active-site Tele-UMP-histidine intermediate is H188. Q190 contributes to the UDP-alpha-D-glucose binding site. The Fe cation site is built by E204, H306, H323, and H325. Residues 338–341 (KFMV) and 343–344 (FE) each bind UDP-alpha-D-glucose.

This sequence belongs to the galactose-1-phosphate uridylyltransferase type 1 family. Homodimer. The cofactor is Zn(2+).

The enzyme catalyses alpha-D-galactose 1-phosphate + UDP-alpha-D-glucose = alpha-D-glucose 1-phosphate + UDP-alpha-D-galactose. Its pathway is carbohydrate metabolism; galactose metabolism. This chain is Galactose-1-phosphate uridylyltransferase (GAL7), found in Cryptococcus neoformans var. neoformans serotype D (strain B-3501A) (Filobasidiella neoformans).